The following is a 427-amino-acid chain: Retron Mx65 reverse transcriptase (427 aa).

The 231-residue stretch at 136 to 366 (RHYSIHRPRE…GAQRVTGVTV (231 aa)) folds into the Reverse transcriptase domain. Mg(2+)-binding residues include Asp-219, Asp-315, and Asp-316.

This sequence belongs to the bacterial reverse transcriptase family.

The catalysed reaction is DNA(n) + a 2'-deoxyribonucleoside 5'-triphosphate = DNA(n+1) + diphosphate. In terms of biological role, reverse transcriptase (RT) responsible for synthesis of msDNA-Mx65 (a branched molecule with RNA linked by a 2',5'-phosphodiester bond to ssDNA). The retron transcript serves as primer (from a conserved internal G residue) and template for the reaction, and codes for the RT. The retron is involved in antiviral defense. This chain is Retron Mx65 reverse transcriptase, found in Myxococcus xanthus.